A 193-amino-acid chain; its full sequence is Potassium-transporting ATPase KdpC subunit (193 aa).

Residues 14 to 34 (ITFTFLVLCGLVYPLIVTGIA) form a helical membrane-spanning segment.

This sequence belongs to the KdpC family. As to quaternary structure, the system is composed of three essential subunits: KdpA, KdpB and KdpC.

It localises to the cell membrane. In terms of biological role, part of the high-affinity ATP-driven potassium transport (or Kdp) system, which catalyzes the hydrolysis of ATP coupled with the electrogenic transport of potassium into the cytoplasm. This subunit acts as a catalytic chaperone that increases the ATP-binding affinity of the ATP-hydrolyzing subunit KdpB by the formation of a transient KdpB/KdpC/ATP ternary complex. This is Potassium-transporting ATPase KdpC subunit from Bacillus thuringiensis subsp. konkukian (strain 97-27).